The sequence spans 729 residues: Sorting nexin mvp1 (729 aa).

Disordered stretches follow at residues 1 to 43 (MSLF…SANL) and 177 to 340 (PLPK…EEPN). The PX domain maps to 356 to 464 (EETVTVNLLP…VMFLTVPTEL (109 aa)). Residues Arg392, Ser394, Lys418, and Arg431 each contribute to the a 1,2-diacyl-sn-glycero-3-phospho-(1D-myo-inositol-3-phosphate) site.

This sequence belongs to the sorting nexin family.

The protein resides in the cytoplasm. It localises to the membrane. Required for vacuolar protein sorting. The sequence is that of Sorting nexin mvp1 (mvp1) from Aspergillus fumigatus (strain ATCC MYA-4609 / CBS 101355 / FGSC A1100 / Af293) (Neosartorya fumigata).